The following is a 244-amino-acid chain: Phosphoribosyl isomerase A (244 aa).

Residue Asp10 is the Proton acceptor of the active site. The Proton donor role is filled by Asp129.

Belongs to the HisA/HisF family.

Its subcellular location is the cytoplasm. The enzyme catalyses 1-(5-phospho-beta-D-ribosyl)-5-[(5-phospho-beta-D-ribosylamino)methylideneamino]imidazole-4-carboxamide = 5-[(5-phospho-1-deoxy-D-ribulos-1-ylimino)methylamino]-1-(5-phospho-beta-D-ribosyl)imidazole-4-carboxamide. It carries out the reaction N-(5-phospho-beta-D-ribosyl)anthranilate = 1-(2-carboxyphenylamino)-1-deoxy-D-ribulose 5-phosphate. The protein operates within amino-acid biosynthesis; L-histidine biosynthesis; L-histidine from 5-phospho-alpha-D-ribose 1-diphosphate: step 4/9. It participates in amino-acid biosynthesis; L-tryptophan biosynthesis; L-tryptophan from chorismate: step 3/5. Functionally, involved in both the histidine and tryptophan biosynthetic pathways. The sequence is that of Phosphoribosyl isomerase A from Mycobacterium ulcerans (strain Agy99).